A 227-amino-acid polypeptide reads, in one-letter code: Cytochrome c oxidase subunit 2 (227 aa).

Topologically, residues 1 to 14 (MAHPVQLGLQDATS) are mitochondrial intermembrane. A helical membrane pass occupies residues 15–45 (PVMEELITFHDYALMTISLISFLVLYALFST). Residues 46–59 (LTTKLTNTNITDAQ) lie on the Mitochondrial matrix side of the membrane. Residues 60 to 87 (EMETTWTILPAVILILIALPSLRILYLT) form a helical membrane-spanning segment. The Mitochondrial intermembrane portion of the chain corresponds to 88–227 (DEINNPSFTI…IFEMGPVFTL (140 aa)). Positions 161, 196, 198, 200, 204, and 207 each coordinate Cu cation. Position 198 (E198) interacts with Mg(2+).

This sequence belongs to the cytochrome c oxidase subunit 2 family. In terms of assembly, component of the cytochrome c oxidase (complex IV, CIV), a multisubunit enzyme composed of 14 subunits. The complex is composed of a catalytic core of 3 subunits MT-CO1, MT-CO2 and MT-CO3, encoded in the mitochondrial DNA, and 11 supernumerary subunits COX4I, COX5A, COX5B, COX6A, COX6B, COX6C, COX7A, COX7B, COX7C, COX8 and NDUFA4, which are encoded in the nuclear genome. The complex exists as a monomer or a dimer and forms supercomplexes (SCs) in the inner mitochondrial membrane with NADH-ubiquinone oxidoreductase (complex I, CI) and ubiquinol-cytochrome c oxidoreductase (cytochrome b-c1 complex, complex III, CIII), resulting in different assemblies (supercomplex SCI(1)III(2)IV(1) and megacomplex MCI(2)III(2)IV(2)). Found in a complex with TMEM177, COA6, COX18, COX20, SCO1 and SCO2. Interacts with TMEM177 in a COX20-dependent manner. Interacts with COX20. Interacts with COX16. Cu cation serves as cofactor.

It localises to the mitochondrion inner membrane. The enzyme catalyses 4 Fe(II)-[cytochrome c] + O2 + 8 H(+)(in) = 4 Fe(III)-[cytochrome c] + 2 H2O + 4 H(+)(out). Its function is as follows. Component of the cytochrome c oxidase, the last enzyme in the mitochondrial electron transport chain which drives oxidative phosphorylation. The respiratory chain contains 3 multisubunit complexes succinate dehydrogenase (complex II, CII), ubiquinol-cytochrome c oxidoreductase (cytochrome b-c1 complex, complex III, CIII) and cytochrome c oxidase (complex IV, CIV), that cooperate to transfer electrons derived from NADH and succinate to molecular oxygen, creating an electrochemical gradient over the inner membrane that drives transmembrane transport and the ATP synthase. Cytochrome c oxidase is the component of the respiratory chain that catalyzes the reduction of oxygen to water. Electrons originating from reduced cytochrome c in the intermembrane space (IMS) are transferred via the dinuclear copper A center (CU(A)) of subunit 2 and heme A of subunit 1 to the active site in subunit 1, a binuclear center (BNC) formed by heme A3 and copper B (CU(B)). The BNC reduces molecular oxygen to 2 water molecules using 4 electrons from cytochrome c in the IMS and 4 protons from the mitochondrial matrix. This is Cytochrome c oxidase subunit 2 (MT-CO2) from Chlorocebus aethiops (Green monkey).